Consider the following 512-residue polypeptide: GMP synthase [glutamine-hydrolyzing] (512 aa).

In terms of domain architecture, Glutamine amidotransferase type-1 spans 3-196; sequence NILILDFGSQ…VKHICQTSET (194 aa). The active-site Nucleophile is the C80. Catalysis depends on residues H169 and E171. One can recognise a GMPS ATP-PPase domain in the interval 197–387; it reads WKIETIEKQL…LGLPDVLISR (191 aa). 225–231 lines the ATP pocket; the sequence is SGGVDSS.

As to quaternary structure, homodimer.

It catalyses the reaction XMP + L-glutamine + ATP + H2O = GMP + L-glutamate + AMP + diphosphate + 2 H(+). Its pathway is purine metabolism; GMP biosynthesis; GMP from XMP (L-Gln route): step 1/1. Functionally, catalyzes the synthesis of GMP from XMP. The chain is GMP synthase [glutamine-hydrolyzing] (guaA) from Chlamydia muridarum (strain MoPn / Nigg).